The following is a 110-amino-acid chain: Parvalbumin alpha (110 aa).

2 EF-hand domains span residues 39–74 and 78–110; these read KNAK…FAPE and LSEK…VANS. The Ca(2+) site is built by Asp-52, Asp-54, Ser-56, Phe-58, Glu-60, Glu-63, Asp-91, Asp-93, Asp-95, Lys-97, and Glu-102.

Belongs to the parvalbumin family.

Functionally, in muscle, parvalbumin is thought to be involved in relaxation after contraction. It binds two calcium ions. The chain is Parvalbumin alpha from Callorhinchus milii (Ghost shark).